The sequence spans 250 residues: Intermembrane phospholipid transport system lipoprotein MlaA (250 aa).

The first 18 residues, 1–18 (MKTKTILTALLSAIALTG), serve as a signal peptide directing secretion. The N-palmitoyl cysteine moiety is linked to residue Cys19. The S-diacylglycerol cysteine moiety is linked to residue Cys19.

The protein belongs to the MlaA family.

It localises to the cell outer membrane. In terms of biological role, involved in a phospholipid transport pathway that maintains lipid asymmetry in the outer membrane by retrograde trafficking of phospholipids from the outer membrane to the inner membrane. The protein is Intermembrane phospholipid transport system lipoprotein MlaA of Haemophilus influenzae (strain ATCC 51907 / DSM 11121 / KW20 / Rd).